An 81-amino-acid polypeptide reads, in one-letter code: MLILTRRVGETLMVGDEVSVTVLGVKGNQVRIGVNAPKDIAVHREEIYQRIQHERAMQSQMQHLEQGNFPTSFDDDDFFNR.

Positions 59–71 (SQMQHLEQGNFPT) are enriched in polar residues. Residues 59–81 (SQMQHLEQGNFPTSFDDDDFFNR) are disordered.

The protein belongs to the CsrA/RsmA family. In terms of assembly, homodimer; the beta-strands of each monomer intercalate to form a hydrophobic core, while the alpha-helices form wings that extend away from the core.

It is found in the cytoplasm. In terms of biological role, a key translational regulator that binds mRNA to regulate translation initiation and/or mRNA stability. Mediates global changes in gene expression, shifting from rapid growth to stress survival by linking envelope stress, the stringent response and the catabolite repression systems. Usually binds in the 5'-UTR; binding at or near the Shine-Dalgarno sequence prevents ribosome-binding, repressing translation, binding elsewhere in the 5'-UTR can activate translation and/or stabilize the mRNA. Its function is antagonized by small RNA(s). The protein is Translational regulator CsrA of Psychrobacter sp. (strain PRwf-1).